The sequence spans 84 residues: Small ribosomal subunit protein uS17 (84 aa).

This sequence belongs to the universal ribosomal protein uS17 family. Part of the 30S ribosomal subunit.

One of the primary rRNA binding proteins, it binds specifically to the 5'-end of 16S ribosomal RNA. The polypeptide is Small ribosomal subunit protein uS17 (Pectobacterium atrosepticum (strain SCRI 1043 / ATCC BAA-672) (Erwinia carotovora subsp. atroseptica)).